An 89-amino-acid polypeptide reads, in one-letter code: Small ribosomal subunit protein bS20 (89 aa).

Residues 1-26 are disordered; that stretch reads MANSAQARKRARQADGQRSHNASLRS.

Belongs to the bacterial ribosomal protein bS20 family.

Its function is as follows. Binds directly to 16S ribosomal RNA. The chain is Small ribosomal subunit protein bS20 from Dechloromonas aromatica (strain RCB).